We begin with the raw amino-acid sequence, 188 residues long: MKGLIIIGSAQVNSHTSALARYLTEHFKTHDIEAEIFDLAEKPLNQLDFSGTTPSIDEIKQNMKDLKEKAMAADFLILGTPNYHGSYSGILKNALDHLNMDYFKMKPVGLIGNSGGIVSSEPLSHLRVIVRSLLGIAVPTQIATHDSDFAKNEDGSYYLNDSEFQLRARLFVDQIVSFVNNSPYEHLK.

The protein belongs to the azoreductase type 2 family. Homotetramer. It depends on FMN as a cofactor.

Functionally, catalyzes the reductive cleavage of azo bond in aromatic azo compounds to the corresponding amines. Requires NADPH, but not NADH, as an electron donor for its activity. This is FMN-dependent NADPH-azoreductase (azo1) from Staphylococcus aureus (strain MSSA476).